Here is a 215-residue protein sequence, read N- to C-terminus: MERNKLARQIIDTCLEMTRLGLNQGTAGNVSVRYQDGMLITPTGIPYEKLTESHIVFIDGNGKHEEGKLPSSEWRFHMAAYQSRPDANAVVHNHAVHCTAVSILNRSIPAIHYMIAAAGGNSIPCAPYATFGTRELSEHVALALKNRKATLLQHHGLIACEVNLEKALWLAHEVEVLAQLYLTTLAITDPVPVLSDEEIAVVLEKFKTYGLRIEE.

Substrate is bound by residues 28–29 (GN), 43–44 (TG), and 71–72 (SS). Glutamate 73 functions as the Proton donor/acceptor in the catalytic mechanism. Zn(2+)-binding residues include glutamate 73, histidine 92, histidine 94, and histidine 155.

This sequence belongs to the aldolase class II family. AraD/FucA subfamily. Homotetramer. Zn(2+) serves as cofactor.

The catalysed reaction is L-fuculose 1-phosphate = (S)-lactaldehyde + dihydroxyacetone phosphate. It participates in carbohydrate degradation; L-fucose degradation; L-lactaldehyde and glycerone phosphate from L-fucose: step 3/3. With respect to regulation, inhibited by phosphoglycolohydroxamate (PGH). Its function is as follows. Involved in the degradation of L-fucose and D-arabinose. Catalyzes the reversible cleavage of L-fuculose 1-phosphate (Fuc1P) to yield dihydroxyacetone phosphate (DHAP) and L-lactaldehyde. Also able to catalyze the reversible cleavage of D-ribulose 1-phosphate, but FucA has a higher affinity for L-fuculose 1-phosphate and L-lactaldehyde than for D-ribulose 1-phosphate and glycolaldehyde, respectively. FucA possesses a high specificity for the dihydroxyacetone phosphate (DHAP), but accepts a great variety of different aldehydes and has a strong preference for L-configurated alpha-hydroxy aldehydes. FucA generates a vicinal diol unit having the absolute (3R,4R)-cis configuration (D-erythro). This is L-fuculose phosphate aldolase from Escherichia coli (strain K12).